We begin with the raw amino-acid sequence, 343 residues long: Probable dual-specificity RNA methyltransferase RlmN (343 aa).

The active-site Proton acceptor is the E91. A Radical SAM core domain is found at H97–D326. A disulfide bond links C104 and C331. The [4Fe-4S] cluster site is built by C111, C115, and C118. Residues G158–E159, S190, S213–H215, and N289 contribute to the S-adenosyl-L-methionine site. C331 serves as the catalytic S-methylcysteine intermediate.

The protein belongs to the radical SAM superfamily. RlmN family. Requires [4Fe-4S] cluster as cofactor.

It is found in the cytoplasm. It carries out the reaction adenosine(2503) in 23S rRNA + 2 reduced [2Fe-2S]-[ferredoxin] + 2 S-adenosyl-L-methionine = 2-methyladenosine(2503) in 23S rRNA + 5'-deoxyadenosine + L-methionine + 2 oxidized [2Fe-2S]-[ferredoxin] + S-adenosyl-L-homocysteine. It catalyses the reaction adenosine(37) in tRNA + 2 reduced [2Fe-2S]-[ferredoxin] + 2 S-adenosyl-L-methionine = 2-methyladenosine(37) in tRNA + 5'-deoxyadenosine + L-methionine + 2 oxidized [2Fe-2S]-[ferredoxin] + S-adenosyl-L-homocysteine. Its function is as follows. Specifically methylates position 2 of adenine 2503 in 23S rRNA and position 2 of adenine 37 in tRNAs. This chain is Probable dual-specificity RNA methyltransferase RlmN, found in Thermotoga petrophila (strain ATCC BAA-488 / DSM 13995 / JCM 10881 / RKU-1).